Here is an 825-residue protein sequence, read N- to C-terminus: Ubiquitin carboxyl-terminal hydrolase 16 (825 aa).

Residues 1–20 (MGKKRTKGRSAPDTVASESA) form a disordered region. The segment at 22 to 141 (PVCRHLRKGL…QVVDYVRKQA (120 aa)) adopts a UBP-type zinc-finger fold. Residues cysteine 24, histidine 26, cysteine 48, cysteine 51, cysteine 73, cysteine 76, cysteine 81, histidine 89, histidine 93, histidine 102, cysteine 115, and cysteine 118 each contribute to the Zn(2+) site. Lysine 139 is covalently cross-linked (Glycyl lysine isopeptide (Lys-Gly) (interchain with G-Cter in SUMO2)). The span at 164–180 (EKESKNEQEREKSENLA) shows a compositional bias: basic and acidic residues. Residues 164-184 (EKESKNEQEREKSENLAKETI) are disordered. The residue at position 188 (serine 188) is a Phosphoserine. The USP domain occupies 195–824 (KGLSNLGNTC…QAYLLFYERI (630 aa)). Cysteine 204 acts as the Nucleophile in catalysis. Positions 393 to 407 (SGKKSINDKNVKMTM) are enriched in basic and acidic residues. Residues 393–456 (SGKKSINDKN…KQAKNQRRQQ (64 aa)) are disordered. Residues 408–419 (EEEDKDSEEEKD) show a composition bias toward acidic residues. Serine 414 carries the post-translational modification Phosphoserine. Over residues 436–456 (HLQKKAKKQAKKQAKNQRRQQ) the composition is skewed to basic residues. Phosphoserine occurs at positions 520 and 531. Histidine 759 (proton acceptor) is an active-site residue.

Belongs to the peptidase C19 family. USP16 subfamily. As to quaternary structure, homotetramer. Associates with late pre-40S ribosomes. Interacts with CEP78; promoting deubiquitination of tektins. In terms of processing, phosphorylated at the onset of mitosis and dephosphorylated during the metaphase/anaphase transition. Phosphorylation by AURKB enhances the deubiquitinase activity.

Its subcellular location is the nucleus. It is found in the cytoplasm. The catalysed reaction is Thiol-dependent hydrolysis of ester, thioester, amide, peptide and isopeptide bonds formed by the C-terminal Gly of ubiquitin (a 76-residue protein attached to proteins as an intracellular targeting signal).. Specifically deubiquitinates 'Lys-120' of histone H2A (H2AK119Ub), a specific tag for epigenetic transcriptional repression, thereby acting as a coactivator. Deubiquitination of histone H2A is a prerequisite for subsequent phosphorylation at 'Ser-11' of histone H3 (H3S10ph), and is required for chromosome segregation when cells enter into mitosis. In resting B- and T-lymphocytes, phosphorylation by AURKB leads to enhance its activity, thereby maintaining transcription in resting lymphocytes. Regulates Hox gene expression via histone H2A deubiquitination. Prefers nucleosomal substrates. Does not deubiquitinate histone H2B. Also deubiquitinates non-histone proteins, such as ribosomal protein RPS27A: deubiquitination of monoubiquitinated RPS27A promotes maturation of the 40S ribosomal subunit. Also mediates deubiquitination of tektin proteins (TEKT1, TEKT2, TEK3, TEKT4 and TEKT5), promoting their stability. The chain is Ubiquitin carboxyl-terminal hydrolase 16 (Usp16) from Mus musculus (Mouse).